Reading from the N-terminus, the 618-residue chain is Very-long-chain aldehyde decarbonylase GL1-3 (618 aa).

7 helical membrane passes run 9–29 (LSSWPWAFLGSYKYLLYGPVV), 46–66 (TSWCLHLILLLALRSLTMLFF), 91–111 (MVIMQTLIAAVLVTSRVFPAT), 121–141 (GWAIAVVLHVAVSEPAFYWAH), 174–194 (LESLILTLVAWAPLAGAFMAG), 289–309 (DFVFLVHVVDVVSSMHVPFAF), and 315–335 (LPFATHLVLLPLWPIAFGFML). Residues 127–267 (VLHVAVSEPA…MPLFDALGGT (141 aa)) form the Fatty acid hydroxylase domain.

The protein belongs to the sterol desaturase family. As to quaternary structure, homodimer. In terms of tissue distribution, expressed in germinating seeds and stamens.

It localises to the endoplasmic reticulum membrane. It catalyses the reaction a long-chain fatty aldehyde + 2 NADPH + O2 + H(+) = a long-chain alkane + formate + 2 NADP(+) + H2O. Aldehyde decarbonylase involved in the conversion of aldehydes to alkanes. Core component of a very-long-chain alkane synthesis complex. In Oryza sativa subsp. japonica (Rice), this protein is Very-long-chain aldehyde decarbonylase GL1-3.